The chain runs to 420 residues: Tyrosine-protein phosphatase non-receptor type 20 (420 aa).

The span at 1–11 shows a compositional bias: basic and acidic residues; it reads MSSPRDFRAEP. Disordered stretches follow at residues 1 to 47 and 68 to 108; these read MSSP…VFEN and DVFE…SQAL. A compositionally biased stretch (polar residues) spans 31–41; sequence LPSSSQENTPR. Serine 76 and serine 120 each carry phosphoserine. The region spanning 159–412 is the Tyrosine-protein phosphatase domain; that stretch reads IMQEFMALEL…HFCYDIVLEV (254 aa). Residues aspartate 323, 353-359, and glutamine 397 contribute to the substrate site; that span reads CSAGIGR. Residue cysteine 353 is the Phosphocysteine intermediate of the active site.

This sequence belongs to the protein-tyrosine phosphatase family. Non-receptor class subfamily. In terms of tissue distribution, present in many cell lines (at protein level). Widely expressed.

It localises to the nucleus. It is found in the cytoplasm. Its subcellular location is the cytoskeleton. The protein resides in the microtubule organizing center. The protein localises to the centrosome. It catalyses the reaction O-phospho-L-tyrosyl-[protein] + H2O = L-tyrosyl-[protein] + phosphate. Functionally, tyrosine-protein phosphatase targeted to sites of actin polymerization in response of varied extracellular stimuli. Has tyrosine phosphatase activity towards various tyrosyl phosphorylated substrates. This is Tyrosine-protein phosphatase non-receptor type 20 from Homo sapiens (Human).